The sequence spans 174 residues: Methylated-DNA--protein-cysteine methyltransferase (174 aa).

The Nucleophile; methyl group acceptor role is filled by Cys-141.

Belongs to the MGMT family.

The protein localises to the cytoplasm. The enzyme catalyses a 6-O-methyl-2'-deoxyguanosine in DNA + L-cysteinyl-[protein] = S-methyl-L-cysteinyl-[protein] + a 2'-deoxyguanosine in DNA. It catalyses the reaction a 4-O-methyl-thymidine in DNA + L-cysteinyl-[protein] = a thymidine in DNA + S-methyl-L-cysteinyl-[protein]. Involved in the cellular defense against the biological effects of O6-methylguanine (O6-MeG) and O4-methylthymine (O4-MeT) in DNA. Repairs the methylated nucleobase in DNA by stoichiometrically transferring the methyl group to a cysteine residue in the enzyme. This is a suicide reaction: the enzyme is irreversibly inactivated. This Thermococcus kodakarensis (strain ATCC BAA-918 / JCM 12380 / KOD1) (Pyrococcus kodakaraensis (strain KOD1)) protein is Methylated-DNA--protein-cysteine methyltransferase.